The sequence spans 338 residues: Glyceraldehyde-3-phosphate dehydrogenase, cytosolic (338 aa).

Residues 14–15 (RI), D36, and R83 each bind NAD(+). D-glyceraldehyde 3-phosphate contacts are provided by residues 154–156 (SCT), T185, 214–215 (TG), and R237. C155 acts as the Nucleophile in catalysis. N319 serves as a coordination point for NAD(+).

It belongs to the glyceraldehyde-3-phosphate dehydrogenase family. As to quaternary structure, homotetramer.

It is found in the cytoplasm. The catalysed reaction is D-glyceraldehyde 3-phosphate + phosphate + NAD(+) = (2R)-3-phospho-glyceroyl phosphate + NADH + H(+). Its pathway is carbohydrate degradation; glycolysis; pyruvate from D-glyceraldehyde 3-phosphate: step 1/5. Functionally, key enzyme in glycolysis that catalyzes the first step of the pathway by converting D-glyceraldehyde 3-phosphate (G3P) into 3-phospho-D-glyceroyl phosphate. Essential for the maintenance of cellular ATP levels and carbohydrate metabolism. This Pisum sativum (Garden pea) protein is Glyceraldehyde-3-phosphate dehydrogenase, cytosolic (GAPC1).